Here is a 237-residue protein sequence, read N- to C-terminus: 1-(5-phosphoribosyl)-5-[(5-phosphoribosylamino)methylideneamino] imidazole-4-carboxamide isomerase (237 aa).

The active-site Proton acceptor is Asp8. The active-site Proton donor is the Asp130.

This sequence belongs to the HisA/HisF family.

Its subcellular location is the cytoplasm. It carries out the reaction 1-(5-phospho-beta-D-ribosyl)-5-[(5-phospho-beta-D-ribosylamino)methylideneamino]imidazole-4-carboxamide = 5-[(5-phospho-1-deoxy-D-ribulos-1-ylimino)methylamino]-1-(5-phospho-beta-D-ribosyl)imidazole-4-carboxamide. The protein operates within amino-acid biosynthesis; L-histidine biosynthesis; L-histidine from 5-phospho-alpha-D-ribose 1-diphosphate: step 4/9. This is 1-(5-phosphoribosyl)-5-[(5-phosphoribosylamino)methylideneamino] imidazole-4-carboxamide isomerase from Caldicellulosiruptor bescii (strain ATCC BAA-1888 / DSM 6725 / KCTC 15123 / Z-1320) (Anaerocellum thermophilum).